Reading from the N-terminus, the 877-residue chain is MTGNEIRESYLKFFEKKGHKILPSASLIPLNDPSILWTAAGMVPFKPFFTGAAKPEYTRVTTCQKCIRTPDIESVGKTARHHTFFEMLGNFSFGDYFKESAIPWAWEFVTEHLRLPADKLWISIFLDDDEAFEIWNKTVGVPAGRIVRMGKDTNFWEIGVGPCGPCSEIYVDLGAERGCGSPECKVGCDCDRFLEIWNLVFIQFFKDEEGNYTPLTSKGIDTGFGLERVASVMQGVPTNFDTDLFREIMDFTAGLFGLKYGVDGRVDVALKVIADHCRAITFAVADGALPSNEGRGYVIRRLLRRAVRFGRLLGIEDPFLHEVSGAVVRQMGRVYPELVTQREHVFRVIRREEERFGETLAQGTEMLNRLIAEARQAGSAVVSGEDAFRLYDTYGFPLELTQEMAGEQGLTVDTDGFGRAMEEQRQRARSARQETDYISGRDAMFKKMREEVGETVFVGYDALEATGRVLRIVQGGKRLESAQAGEEVEFILDVTPFYAESGGQVSDRGKVTAADLEVEIHEVTKPVENLFVHRGKVVAGILKEHDTVTARVDPARRAATCRNHSATHLLHKALKEVLGGHVNQAGSLVEPERLRFDFTHYAAATPEELQKVEELVNRMVLSALPVEAFETSLAEARKMGAAALFGEKYGERVRVVKMGDFSLELCGGTHLRNTAEVGLFKLLGESSVGAGLRRIEAVTGEGALSYVKAKEEQLAEIARLVKAAPHEAVRRVEGLLQTVRDLEAENEALQARLARYQVQDLMDRLREVKGVKVLAGQAAAPDMDSLRGMVDLLRDRVGSGVIVLGSAGENRVNLVAAVTKDLVEKGLHAGKLVKELAPVVGGGGGGRPEMAQAGGKDPSRLKEALEKTYKAVESQLK.

Zn(2+) is bound by residues His564, His568, Cys666, and His670.

Belongs to the class-II aminoacyl-tRNA synthetase family. The cofactor is Zn(2+).

The protein localises to the cytoplasm. It catalyses the reaction tRNA(Ala) + L-alanine + ATP = L-alanyl-tRNA(Ala) + AMP + diphosphate. Its function is as follows. Catalyzes the attachment of alanine to tRNA(Ala) in a two-step reaction: alanine is first activated by ATP to form Ala-AMP and then transferred to the acceptor end of tRNA(Ala). Also edits incorrectly charged Ser-tRNA(Ala) and Gly-tRNA(Ala) via its editing domain. This is Alanine--tRNA ligase from Pelotomaculum thermopropionicum (strain DSM 13744 / JCM 10971 / SI).